Here is a 284-residue protein sequence, read N- to C-terminus: Bifunctional protein FolD (284 aa).

Residues 165–167 (GRS) and S190 contribute to the NADP(+) site.

The protein belongs to the tetrahydrofolate dehydrogenase/cyclohydrolase family. As to quaternary structure, homodimer.

The enzyme catalyses (6R)-5,10-methylene-5,6,7,8-tetrahydrofolate + NADP(+) = (6R)-5,10-methenyltetrahydrofolate + NADPH. The catalysed reaction is (6R)-5,10-methenyltetrahydrofolate + H2O = (6R)-10-formyltetrahydrofolate + H(+). Its pathway is one-carbon metabolism; tetrahydrofolate interconversion. Its function is as follows. Catalyzes the oxidation of 5,10-methylenetetrahydrofolate to 5,10-methenyltetrahydrofolate and then the hydrolysis of 5,10-methenyltetrahydrofolate to 10-formyltetrahydrofolate. This is Bifunctional protein FolD from Streptococcus sanguinis (strain SK36).